The following is a 32-amino-acid chain: Photosystem II reaction center protein Z (32 aa).

A helical membrane pass occupies residues 9 to 29; the sequence is IIFSGSLIWVFLLIIVGFLNY.

This sequence belongs to the PsbZ family. As to quaternary structure, PSII is composed of 1 copy each of membrane proteins PsbA, PsbB, PsbC, PsbD, PsbE, PsbF, PsbH, PsbI, PsbJ, PsbK, PsbL, PsbM, PsbT, PsbY, PsbZ, Psb30/Ycf12, at least 3 peripheral proteins of the oxygen-evolving complex and a large number of cofactors. It forms dimeric complexes.

The protein localises to the plastid. It is found in the chloroplast thylakoid membrane. May control the interaction of photosystem II (PSII) cores with the light-harvesting antenna, regulates electron flow through the 2 photosystem reaction centers. PSII is a light-driven water plastoquinone oxidoreductase, using light energy to abstract electrons from H(2)O, generating a proton gradient subsequently used for ATP formation. The protein is Photosystem II reaction center protein Z of Euglena myxocylindracea.